The primary structure comprises 205 residues: Probable molybdenum cofactor guanylyltransferase (205 aa).

Residues 9 to 11 (LAG), Lys21, Asp66, and Asp95 each bind GTP. Asp95 serves as a coordination point for Mg(2+).

It belongs to the MobA family. Mg(2+) is required as a cofactor.

The protein localises to the cytoplasm. It carries out the reaction Mo-molybdopterin + GTP + H(+) = Mo-molybdopterin guanine dinucleotide + diphosphate. In terms of biological role, transfers a GMP moiety from GTP to Mo-molybdopterin (Mo-MPT) cofactor (Moco or molybdenum cofactor) to form Mo-molybdopterin guanine dinucleotide (Mo-MGD) cofactor. The protein is Probable molybdenum cofactor guanylyltransferase of Pelotomaculum thermopropionicum (strain DSM 13744 / JCM 10971 / SI).